A 294-amino-acid chain; its full sequence is ATP phosphoribosyltransferase (294 aa).

It belongs to the ATP phosphoribosyltransferase family. Long subfamily. Mg(2+) is required as a cofactor.

The protein resides in the cytoplasm. The enzyme catalyses 1-(5-phospho-beta-D-ribosyl)-ATP + diphosphate = 5-phospho-alpha-D-ribose 1-diphosphate + ATP. It functions in the pathway amino-acid biosynthesis; L-histidine biosynthesis; L-histidine from 5-phospho-alpha-D-ribose 1-diphosphate: step 1/9. Its activity is regulated as follows. Feedback inhibited by histidine. Catalyzes the condensation of ATP and 5-phosphoribose 1-diphosphate to form N'-(5'-phosphoribosyl)-ATP (PR-ATP). Has a crucial role in the pathway because the rate of histidine biosynthesis seems to be controlled primarily by regulation of HisG enzymatic activity. In Chlorobaculum parvum (strain DSM 263 / NCIMB 8327) (Chlorobium vibrioforme subsp. thiosulfatophilum), this protein is ATP phosphoribosyltransferase.